The primary structure comprises 516 residues: MANEEQGSILKALDVAKTQWYHVTAVVVSGMGFFTDSYDLFVISLITKLLGRIYYQVPGSSSPGSLPDGISAAVSGVAFAGTFIGQIFFGCLGDKLGRKRVYGLTLLIMTICSICSGLSLGRDPKTVMVTLCFFRFWLGFGIGGDYPLSATIMSEYSNKRTRGAFIAAVFGMQGIGILAAGAVSLLVSAVFESKFPSRAYILDGAASTVPQADYVWRIILMVGALPALLTYYWRMKMPETARYTALVSKNAEQAALDMTKVLNVDIEASAAKNDQARVSSDEFGLFSMKFLRRHGLHLLGTASTWFLLDIAFYSQNLFQKDIFTTIGWLPSAKTMNAIQELYMIAKAQTIIACCSTVPGYFFTVGFIDYMGRKKIQIMGFAMMTIFMLSLAIPYHHWTLPANRIGFVVLYSFTFFFSNFGPNATTFIVPAEIFPARIRSTCHGISAASGKAGAMVGSFGFSALVKALGMSNTLYIMAGINLLGLLLTFTIPETNGKSLEELSGETEPEKIKEKIVV.

Position 2 is an N-acetylalanine (A2). Residues 2-25 lie on the Cytoplasmic side of the membrane; it reads ANEEQGSILKALDVAKTQWYHVTA. Residues 26–46 form a helical membrane-spanning segment; sequence VVVSGMGFFTDSYDLFVISLI. Residues 47-71 are Extracellular-facing; it reads TKLLGRIYYQVPGSSSPGSLPDGIS. The helical transmembrane segment at 72–92 threads the bilayer; it reads AAVSGVAFAGTFIGQIFFGCL. Residues 93-100 are Cytoplasmic-facing; it reads GDKLGRKR. A helical membrane pass occupies residues 101-121; the sequence is VYGLTLLIMTICSICSGLSLG. The Extracellular portion of the chain corresponds to 122 to 132; that stretch reads RDPKTVMVTLC. Residues 133-153 form a helical membrane-spanning segment; it reads FFRFWLGFGIGGDYPLSATIM. The Cytoplasmic segment spans residues 154-162; it reads SEYSNKRTR. A helical membrane pass occupies residues 163-183; the sequence is GAFIAAVFGMQGIGILAAGAV. Residues 184–212 are Extracellular-facing; the sequence is SLLVSAVFESKFPSRAYILDGAASTVPQA. Residues 213-233 form a helical membrane-spanning segment; it reads DYVWRIILMVGALPALLTYYW. Over 234 to 293 the chain is Cytoplasmic; it reads RMKMPETARYTALVSKNAEQAALDMTKVLNVDIEASAAKNDQARVSSDEFGLFSMKFLRR. Residues 294-314 form a helical membrane-spanning segment; sequence HGLHLLGTASTWFLLDIAFYS. The Extracellular portion of the chain corresponds to 315–349; the sequence is QNLFQKDIFTTIGWLPSAKTMNAIQELYMIAKAQT. Residues 350 to 370 traverse the membrane as a helical segment; sequence IIACCSTVPGYFFTVGFIDYM. Residues 371 to 374 are Cytoplasmic-facing; the sequence is GRKK. Residues 375 to 395 form a helical membrane-spanning segment; the sequence is IQIMGFAMMTIFMLSLAIPYH. Residues 396–403 are Extracellular-facing; the sequence is HWTLPANR. The helical transmembrane segment at 404–424 threads the bilayer; it reads IGFVVLYSFTFFFSNFGPNAT. The Cytoplasmic segment spans residues 425–442; it reads TFIVPAEIFPARIRSTCH. Residues 443–463 form a helical membrane-spanning segment; the sequence is GISAASGKAGAMVGSFGFSAL. The Extracellular segment spans residues 464 to 471; the sequence is VKALGMSN. A helical transmembrane segment spans residues 472 to 492; the sequence is TLYIMAGINLLGLLLTFTIPE. The Cytoplasmic segment spans residues 493–516; the sequence is TNGKSLEELSGETEPEKIKEKIVV.

It belongs to the major facilitator superfamily. Phosphate:H(+) symporter (TC 2.A.1.9) family. In terms of tissue distribution, expressed in anthers, tapetumand mature pollen and, to a lower extent, in hydathodes and vascular tissues of cotyledons of flowering plants.

The protein localises to the membrane. Its function is as follows. High-affinity transporter for external inorganic phosphate. In Arabidopsis thaliana (Mouse-ear cress), this protein is Probable inorganic phosphate transporter 1-6 (PHT1-6).